The chain runs to 218 residues: Thiopurine S-methyltransferase (218 aa).

S-adenosyl-L-methionine contacts are provided by Trp-10, Leu-45, Glu-66, and Arg-123.

Belongs to the class I-like SAM-binding methyltransferase superfamily. TPMT family.

It is found in the cytoplasm. It catalyses the reaction S-adenosyl-L-methionine + a thiopurine = S-adenosyl-L-homocysteine + a thiopurine S-methylether.. This chain is Thiopurine S-methyltransferase, found in Xanthomonas campestris pv. campestris (strain 8004).